A 500-amino-acid chain; its full sequence is Autophagy-related protein 18 (500 aa).

The segment at 192 to 212 is disordered; the sequence is DITGQQQQQQPGVDPATSNNT. WD repeat units lie at residues 238-278 and 283-322; these read AHKG…KVYQ and TYPT…VDNK. The short motif at 279-283 is the L/FRRG motif element; it reads FRRGT. The tract at residues 320–374 is disordered; the sequence is DNKSNELNSDDEIEDDLVPRYGDEDEEDEEIDEEATSINSNHSSKEPVVDAKRST. Over residues 342 to 354 the composition is skewed to acidic residues; that stretch reads DEDEEDEEIDEEA. Over residues 362–372 the composition is skewed to basic and acidic residues; the sequence is SSKEPVVDAKR.

Belongs to the WD repeat PROPPIN family. Component of the PI(3,5)P2 regulatory complex.

It localises to the preautophagosomal structure membrane. Its subcellular location is the vacuole membrane. It is found in the endosome membrane. The PI(3,5)P2 regulatory complex regulates both the synthesis and turnover of phosphatidylinositol 3,5-bisphosphate (PtdIns(3,5)P2). Necessary for proper vacuole morphology. Plays an important role in osmotically-induced vacuole fragmentation. Required for cytoplasm to vacuole transport (Cvt) vesicle formation, pexophagy and starvation-induced autophagy. Involved in correct ATG9 trafficking to the pre-autophagosomal structure. Might also be involved in premeiotic DNA replication. This is Autophagy-related protein 18 (ATG18) from Kluyveromyces lactis (strain ATCC 8585 / CBS 2359 / DSM 70799 / NBRC 1267 / NRRL Y-1140 / WM37) (Yeast).